Consider the following 29-residue polypeptide: Dander allergen Equ c 2.0101 (29 aa).

This sequence belongs to the calycin superfamily. Lipocalin family.

Its subcellular location is the secreted. This Equus caballus (Horse) protein is Dander allergen Equ c 2.0101.